The chain runs to 160 residues: Twist-related protein 2 (160 aa).

A disordered region spans residues 1–63 (MEEGSSSPVS…GSPSAQSFEE (63 aa)). The segment covering 27–37 (KRFGRKRRYSK) has biased composition (basic residues). In terms of domain architecture, bHLH spans 66–117 (SQRILANVRERQRTQSLNEAFAALRKIIPTLPSDKLSKIQTLKLAARYIDFL).

In terms of assembly, efficient DNA binding requires dimerization with another bHLH protein. Forms a heterodimer with TCF3/E12. Also interacts with MEF2C. In the embryo, highly expressed in chondrogenic cells. In embryonic skin, expressed in the undifferentiated mesenchymal layer beneath the epidermis which later develops into the dermis. Expressed in early myeloid cells but not in lymphoid cells in the liver. Expression also detected in the secretory ependymal epithelium of the choroid plexus primordium. In the adult, expressed in secreting glandular tissues and tubules.

The protein localises to the nucleus. The protein resides in the cytoplasm. In terms of biological role, binds to the E-box consensus sequence 5'-CANNTG-3' as a heterodimer and inhibits transcriptional activation by MYOD1, MYOG, MEF2A and MEF2C. Also represses expression of pro-inflammatory cytokines such as TNFA and IL1B. Involved in postnatal glycogen storage and energy metabolism. Inhibits the premature or ectopic differentiation of preosteoblast cells during osteogenesis, possibly by changing the internal signal transduction response of osteoblasts to external growth factors. The polypeptide is Twist-related protein 2 (TWIST2) (Homo sapiens (Human)).